The chain runs to 1025 residues: MKFFALFIYRPVATILLSVAITLCGILGFRMLPVAPLPQVDFPVIMVSASLPGASPETMASSVATPLERSLGRIAGVSEMTSSSSLGSTRIILQFDFDRDINGAARDVQAAINAAQSLLPSGMPSRPTYRKANPSDAPIMILTLTSDTYSQGELYDFASTQLAPTISQIDGVGDVDVGGSSLPAVRVGLNPQALFNQGVSLDDVRTAISNANVRKPQGALEDGTHRWQIQTNDELKTAAEYQPLIIHYNNGGAVRLGDVATVTDSVQDVRNAGMTNAKPAILLMIRKLPEANIIQTVDSIRAKLPELQETIPAAIDLQIAQDRSPTIRASLEEVEQTLIISVALVILVVFLFLRSGRATIIPAVAVPVSLIGTFAAMYLCGFSLNNLSLMALTIATGFVVDDAIVVLENIARHLEAGMKPLQAALQGTREVGFTVLSMSLSLVAVFLPLLLMGGLPGRLLREFAVTLSVAIGISLLVSLTLTPMMCGWMLKASKPREQKRLRGFGRMLVALQQGYGKSLKWGLNHTRLVGVVLLGTIALNIWLYISIPKTFFPEQDTGVLMGGIQADQSISFQAMRGKLQDFMKIIRDDPAVDNVTGFTGGSRVNSGMMFITLKPHDERSETAQQIIDRLRVKLAKEPGANLFLMAVQDIRVGGRQSNASYQYTLLSDDLAALREWEPKIRKKLATLPELADVNSDQQDNGAEMNLVYDRDTMARLGIDVQAANSLLNNAFGQRQISTIYQPMNQYKVVMEVDPRYTQDISALEKMFVINNEGKAIPLSYFAKWQPANAPLSVNHQGLSAASTISFNLPTGKSLSDASAAIDRAMTQLGVPSTVRGSFAGTAQVFQETMNSQVILIIAAIATVYIVLGILYESYVHPLTILSTLPSAGVGALLALELFNAPFSLIALIGIMLLIGIVKKNAIMMVDFALEAQRHGNLTPQEAIFQACLLRFRPIMMTTLAALFGALPLVLSGGDGSELRQPLGITIVGGLVMSQLLTLYTTPVVYLFFDRLRLRFSRKPKQTVTE.

A run of 12 helical transmembrane segments spans residues 3-23 (FFAL…AITL), 333-353 (EVEQ…FLFL), 360-380 (IIPA…MYLC), 387-407 (LSLM…IVVL), 431-451 (VGFT…PLLL), 463-483 (FAVT…TLTP), 528-548 (LVGV…ISIP), 853-873 (VILI…LYES), 875-895 (VHPL…LLAL), 897-917 (LFNA…IGIV), 953-973 (PIMM…LSGG), and 984-1004 (ITIV…TPVV).

It belongs to the resistance-nodulation-cell division (RND) (TC 2.A.6) family. MdtC subfamily. Part of a tripartite efflux system composed of MdtA, MdtB and MdtC. MdtC forms a heteromultimer with MdtB.

Its subcellular location is the cell inner membrane. In terms of biological role, the MdtABC tripartite complex confers resistance against novobiocin and deoxycholate. The protein is Multidrug resistance protein MdtC of Escherichia coli O17:K52:H18 (strain UMN026 / ExPEC).